The sequence spans 115 residues: Large ribosomal subunit protein uL22c (115 aa).

Belongs to the universal ribosomal protein uL22 family. As to quaternary structure, part of the 50S ribosomal subunit.

The protein resides in the plastid. It is found in the chloroplast. This protein binds specifically to 23S rRNA. Functionally, the globular domain of the protein is located near the polypeptide exit tunnel on the outside of the subunit, while an extended beta-hairpin is found that lines the wall of the exit tunnel in the center of the 70S ribosome. The polypeptide is Large ribosomal subunit protein uL22c (rpl22) (Thalassiosira pseudonana (Marine diatom)).